Reading from the N-terminus, the 97-residue chain is Co-chaperonin GroES (97 aa).

It belongs to the GroES chaperonin family. As to quaternary structure, heptamer of 7 subunits arranged in a ring. Interacts with the chaperonin GroEL.

It is found in the cytoplasm. In terms of biological role, together with the chaperonin GroEL, plays an essential role in assisting protein folding. The GroEL-GroES system forms a nano-cage that allows encapsulation of the non-native substrate proteins and provides a physical environment optimized to promote and accelerate protein folding. GroES binds to the apical surface of the GroEL ring, thereby capping the opening of the GroEL channel. The protein is Co-chaperonin GroES of Proteus mirabilis (strain HI4320).